The following is a 496-amino-acid chain: Glycerol kinase (496 aa).

Threonine 12 contributes to the ADP binding site. 3 residues coordinate ATP: threonine 12, threonine 13, and serine 14. Residue threonine 12 participates in sn-glycerol 3-phosphate binding. Arginine 16 contacts ADP. Positions 82, 83, and 134 each coordinate sn-glycerol 3-phosphate. Glycerol contacts are provided by arginine 82, glutamate 83, and tyrosine 134. Histidine 230 carries the phosphohistidine; by HPr modification. Aspartate 244 is a binding site for sn-glycerol 3-phosphate. Glycerol-binding residues include aspartate 244 and glutamine 245. Residues threonine 266 and glycine 309 each contribute to the ADP site. ATP-binding residues include threonine 266, glycine 309, glutamine 313, and glycine 410. ADP contacts are provided by glycine 410 and asparagine 414.

The protein belongs to the FGGY kinase family. Homotetramer and homodimer (in equilibrium). In terms of processing, the phosphoenolpyruvate-dependent sugar phosphotransferase system (PTS), including enzyme I, and histidine-containing protein (HPr) are required for the phosphorylation, which leads to the activation of the enzyme.

The catalysed reaction is glycerol + ATP = sn-glycerol 3-phosphate + ADP + H(+). It participates in polyol metabolism; glycerol degradation via glycerol kinase pathway; sn-glycerol 3-phosphate from glycerol: step 1/1. With respect to regulation, activated by phosphorylation and inhibited by fructose 1,6-bisphosphate (FBP). Key enzyme in the regulation of glycerol uptake and metabolism. Catalyzes the phosphorylation of glycerol to yield sn-glycerol 3-phosphate. The protein is Glycerol kinase of Bacillus licheniformis (strain ATCC 14580 / DSM 13 / JCM 2505 / CCUG 7422 / NBRC 12200 / NCIMB 9375 / NCTC 10341 / NRRL NRS-1264 / Gibson 46).